A 431-amino-acid polypeptide reads, in one-letter code: Islet cell autoantigen 1-like protein (431 aa).

Residues 44–247 form the AH domain; it reads ASDAELDAKL…TAQMMTQIQE (204 aa). 2 disordered regions span residues 295–316 and 351–372; these read EEEE…PRDS and CGSP…SLTS. Residues 301–316 are compositionally biased toward basic and acidic residues; sequence RFEREPAVARALPRDS. The segment covering 356–372 has biased composition (polar residues); that stretch reads TGLTSQEPSVGPGSLTS.

This is Islet cell autoantigen 1-like protein (Ica1l) from Mus musculus (Mouse).